Consider the following 418-residue polypeptide: Deubiquitinase and deneddylase Dub1 (418 aa).

Polar residues predominate over residues 1-10; sequence MLSPTNSISK. The tract at residues 1–23 is disordered; sequence MLSPTNSISKTAPVPPQDSSKPV. The chain crosses the membrane as a helical span at residues 40-60; that stretch reads TALAVLLVVVTLGLILLFYSF. The segment at 72–144 is disordered; that stretch reads TRPSTKEQPT…PLPPKAPKPV (73 aa). The span at 86-141 shows a compositional bias: pro residues; sequence VPLPSPPLAVPRPSTPPPPVISRPSTPPAPTPAISPPSTPSAPKPSTPPPLPPKAP. Residues histidine 288, aspartate 305, and cysteine 358 contribute to the active site.

It belongs to the peptidase C48 family.

It is found in the secreted. The protein resides in the host cell. Its subcellular location is the membrane. In terms of biological role, effector proteins function to alter host cell physiology and promote bacterial survival in host tissues. This protease possesses deubiquitinating and deneddylating activities. This is Deubiquitinase and deneddylase Dub1 (cdu1) from Chlamydia trachomatis serovar B (strain Jali20/OT).